Here is a 178-residue protein sequence, read N- to C-terminus: Large ribosomal subunit protein uL5 (178 aa).

A2 is modified (N-acetylalanine). Residue K38 forms a Glycyl lysine isopeptide (Lys-Gly) (interchain with G-Cter in SUMO2) linkage. Phosphothreonine occurs at positions 44 and 47. N6-acetyllysine; alternate is present on K52. A Glycyl lysine isopeptide (Lys-Gly) (interchain with G-Cter in SUMO2); alternate cross-link involves residue K52. N6-acetyllysine is present on K85. A Glycyl lysine isopeptide (Lys-Gly) (interchain with G-Cter in SUMO2) cross-link involves residue K154.

It belongs to the universal ribosomal protein uL5 family. In terms of assembly, component of the large ribosomal subunit (LSU). Part of the 5S RNP complex, which is a LSU subcomplex composed of the 5S RNA, RPL5 and RPL11. Component of a hexameric 5S RNP precursor complex, composed of 5S RNA, RRS1, RPF2/BXDC1, RPL5, RPL11 and HEATR3; this complex acts as a precursor for ribosome assembly. Interacts with PML. Interacts with MDM2 (via its RanBP2-type zinc finger domain); negatively regulates MDM2-mediated TP53 ubiquitination and degradation. Interacts with NOP53; retains RPL11 into the nucleolus.

It is found in the nucleus. The protein resides in the nucleolus. Its subcellular location is the cytoplasm. Its function is as follows. Component of the ribosome, a large ribonucleoprotein complex responsible for the synthesis of proteins in the cell. The small ribosomal subunit (SSU) binds messenger RNAs (mRNAs) and translates the encoded message by selecting cognate aminoacyl-transfer RNA (tRNA) molecules. The large subunit (LSU) contains the ribosomal catalytic site termed the peptidyl transferase center (PTC), which catalyzes the formation of peptide bonds, thereby polymerizing the amino acids delivered by tRNAs into a polypeptide chain. The nascent polypeptides leave the ribosome through a tunnel in the LSU and interact with protein factors that function in enzymatic processing, targeting, and the membrane insertion of nascent chains at the exit of the ribosomal tunnel. As part of the 5S RNP/5S ribonucleoprotein particle it is an essential component of the LSU, required for its formation and the maturation of rRNAs. It also couples ribosome biogenesis to p53/TP53 activation. As part of the 5S RNP it accumulates in the nucleoplasm and inhibits MDM2, when ribosome biogenesis is perturbed, mediating the stabilization and the activation of TP53. Promotes nucleolar location of PML. In Oryctolagus cuniculus (Rabbit), this protein is Large ribosomal subunit protein uL5 (RPL11).